Here is a 91-residue protein sequence, read N- to C-terminus: DNA-directed RNA polymerase subunit omega (91 aa).

The protein belongs to the RNA polymerase subunit omega family. In terms of assembly, the RNAP catalytic core consists of 2 alpha, 1 beta, 1 beta' and 1 omega subunit. When a sigma factor is associated with the core the holoenzyme is formed, which can initiate transcription.

The enzyme catalyses RNA(n) + a ribonucleoside 5'-triphosphate = RNA(n+1) + diphosphate. Promotes RNA polymerase assembly. Latches the N- and C-terminal regions of the beta' subunit thereby facilitating its interaction with the beta and alpha subunits. This Enterobacter sp. (strain 638) protein is DNA-directed RNA polymerase subunit omega.